Here is a 765-residue protein sequence, read N- to C-terminus: uncharacterized protein (765 aa).

This is an uncharacterized protein from Methanocaldococcus jannaschii (strain ATCC 43067 / DSM 2661 / JAL-1 / JCM 10045 / NBRC 100440) (Methanococcus jannaschii).